Here is a 607-residue protein sequence, read N- to C-terminus: Pescadillo homolog (607 aa).

The BRCT domain occupies 320–413; that stretch reads KLKNLFKGLK…KLLPVNKYLI (94 aa). The tract at residues 486-607 is disordered; sequence EALNSGALEE…KTQRKEILAK (122 aa). Over residues 495 to 511 the composition is skewed to acidic residues; the sequence is EAPEEEDDDEEAPEEDE. Basic and acidic residues predominate over residues 530 to 549; that stretch reads IFKENPSEQKKLTKQEEALR. Residues 551–562 show a composition bias toward basic residues; sequence RMVKSRHKKLYR. Over residues 563–607 the composition is skewed to basic and acidic residues; the sequence is KMLEKQKKQTKEANLLKEKRQQIDKKQRVEQTQKRKTQRKEILAK.

Belongs to the pescadillo family.

It is found in the nucleus. The protein localises to the nucleolus. Its subcellular location is the nucleoplasm. Functionally, required for maturation of ribosomal RNAs and formation of the large ribosomal subunit. This chain is Pescadillo homolog, found in Culex quinquefasciatus (Southern house mosquito).